A 362-amino-acid chain; its full sequence is Glutamate--cysteine ligase (362 aa).

Belongs to the glutamate--cysteine ligase type 2 family. YbdK subfamily.

It catalyses the reaction L-cysteine + L-glutamate + ATP = gamma-L-glutamyl-L-cysteine + ADP + phosphate + H(+). Functionally, catalyzes the synthesis of gamma-glutamylcysteine (gamma-GC), the main low-molecular-weight thiol compound instead of glutathione in halophilic archaea. This chain is Glutamate--cysteine ligase, found in Natronomonas pharaonis (strain ATCC 35678 / DSM 2160 / CIP 103997 / JCM 8858 / NBRC 14720 / NCIMB 2260 / Gabara) (Halobacterium pharaonis).